The following is a 308-amino-acid chain: Olfactory receptor 8D1 (308 aa).

Residues 1 to 25 (MTMENYSMAAQFVLDGLTQQAELQL) are Extracellular-facing. Residue Asn5 is glycosylated (N-linked (GlcNAc...) asparagine). Residues 26–46 (PLFLLFLGIYVVTVVGNLGMI) traverse the membrane as a helical segment. Topologically, residues 47–54 (LLIAVSPL) are cytoplasmic. Residues 55–75 (LHTPMYYFLSSLSFVDFCYSS) form a helical membrane-spanning segment. Topologically, residues 76 to 99 (VITPKMLVNFLGKKNTILYSECMV) are extracellular. Cys97 and Cys189 are disulfide-bonded. The helical transmembrane segment at 100–120 (QLFFFVVFVVAEGYLLTAMAY) threads the bilayer. Residues 121–139 (DRYVAICSPLLYNAIMSSW) lie on the Cytoplasmic side of the membrane. Residues 140 to 160 (VCSLLVLAAFFLGFLSALTHT) traverse the membrane as a helical segment. Over 161 to 197 (SAMMKLSFCKSHIINHYFCDVLPLLNLSCSNTHLNEL) the chain is Extracellular. Asn186 carries an N-linked (GlcNAc...) asparagine glycan. The helical transmembrane segment at 198 to 217 (LLFIIAGFNTLVPTLAVAVS) threads the bilayer. The Cytoplasmic segment spans residues 218 to 237 (YAFILYSILHIRSSEGRSKA). Residues 238–258 (FGTCSSHLMAVVIFFGSITFM) form a helical membrane-spanning segment. Residues 259 to 271 (YFKPPSSNSLDQE) are Extracellular-facing. The helical transmembrane segment at 272–292 (KVSSVFYTTVIPMLNPLIYSL) threads the bilayer. At 293–308 (RNKDVKKALRKVLVGK) the chain is on the cytoplasmic side.

The protein belongs to the G-protein coupled receptor 1 family. Expressed in the tongue.

It localises to the cell membrane. Functionally, odorant receptor (Potential). May be involved in taste perception. This Homo sapiens (Human) protein is Olfactory receptor 8D1 (OR8D1).